Consider the following 101-residue polypeptide: UPF0235 protein MmarC7_0309 (101 aa).

It belongs to the UPF0235 family.

The sequence is that of UPF0235 protein MmarC7_0309 from Methanococcus maripaludis (strain C7 / ATCC BAA-1331).